Reading from the N-terminus, the 261-residue chain is Indole-3-glycerol phosphate synthase (261 aa).

It belongs to the TrpC family.

The catalysed reaction is 1-(2-carboxyphenylamino)-1-deoxy-D-ribulose 5-phosphate + H(+) = (1S,2R)-1-C-(indol-3-yl)glycerol 3-phosphate + CO2 + H2O. The protein operates within amino-acid biosynthesis; L-tryptophan biosynthesis; L-tryptophan from chorismate: step 4/5. This is Indole-3-glycerol phosphate synthase from Campylobacter curvus (strain 525.92).